A 430-amino-acid polypeptide reads, in one-letter code: Probable proton-coupled zinc antiporter SLC30A4 (430 aa).

Residues 1–113 (MAGPGAWKRL…LLKQRKVKTR (113 aa)) lie on the Cytoplasmic side of the membrane. S36 is modified (phosphoserine). The chain crosses the membrane as a helical span at residues 114–134 (LTIAAVLYLLFMIGELVGGYM). The Lumenal segment spans residues 135–143 (ANSLAIMTD). The chain crosses the membrane as a helical span at residues 144–164 (ALHMLTDLSAIILTLLALWLS). The Zn(2+) site is built by H146 and D150. The Cytoplasmic portion of the chain corresponds to 165-178 (SKSPTRRFTFGFHR). The chain crosses the membrane as a helical span at residues 179 to 199 (LEVLSAMISVMLVYVLMGFLL). Over 200 to 216 (YEAVQRTIHMNYEINGD) the chain is Lumenal. A helical membrane pass occupies residues 217–237 (VMLITAAVGVAVNVIMGFLLN). Topologically, residues 238-275 (QSGHHHSHAHSHSLPSNSPSMVSSGHNHGQDSLAVRAA) are cytoplasmic. A zinc binding region spans residues 240 to 265 (GHHHSHAHSHSLPSNSPSMVSSGHNH). A disordered region spans residues 245–264 (HAHSHSLPSNSPSMVSSGHN). Residues 249–263 (HSLPSNSPSMVSSGH) are compositionally biased toward low complexity. Residues 276-296 (FVHALGDLVQSVGVLIAAYII) traverse the membrane as a helical segment. Positions 278 and 282 each coordinate Zn(2+). The Lumenal segment spans residues 297–311 (RFKPEYKIADPICTY). A helical membrane pass occupies residues 312 to 332 (IFSLLVAFTTFRIIWDTVVII). At 333–430 (LEGVPSHLNV…TCANCHSSST (98 aa)) the chain is on the cytoplasmic side.

The protein belongs to the cation diffusion facilitator (CDF) transporter (TC 2.A.4) family. SLC30A subfamily. Homodimerization could regulate efficiency for zinc transport. Interacts with TMEM163. As to expression, widely expressed. Highly expressed in the brain and in mammary epithelial cell lines.

The protein resides in the endosome membrane. It is found in the late endosome membrane. Its subcellular location is the lysosome membrane. The enzyme catalyses Zn(2+)(in) + 2 H(+)(out) = Zn(2+)(out) + 2 H(+)(in). Functionally, probable proton-coupled zinc ion antiporter mediating zinc import from cytoplasm potentially into the endocytic compartment. Controls zinc deposition in milk. This is Probable proton-coupled zinc antiporter SLC30A4 from Mus musculus (Mouse).